A 287-amino-acid chain; its full sequence is ATP synthase subunit a (287 aa).

A run of 6 helical transmembrane segments spans residues 37–57, 96–116, 144–164, 187–207, 224–244, and 266–286; these read LDSV…MWLA, FIAP…AMDL, DLST…VYSI, PVFA…EYVA, ELVF…LSGV, and TLQA…AHEA.

Belongs to the ATPase A chain family. As to quaternary structure, F-type ATPases have 2 components, CF(1) - the catalytic core - and CF(0) - the membrane proton channel. CF(1) has five subunits: alpha(3), beta(3), gamma(1), delta(1), epsilon(1). CF(0) has three main subunits: a(1), b(2) and c(9-12). The alpha and beta chains form an alternating ring which encloses part of the gamma chain. CF(1) is attached to CF(0) by a central stalk formed by the gamma and epsilon chains, while a peripheral stalk is formed by the delta and b chains.

The protein localises to the cell inner membrane. Key component of the proton channel; it plays a direct role in the translocation of protons across the membrane. The protein is ATP synthase subunit a of Acidovorax ebreus (strain TPSY) (Diaphorobacter sp. (strain TPSY)).